A 92-amino-acid chain; its full sequence is uncharacterized protein (92 aa).

The chain crosses the membrane as a helical span at residues 65 to 86; sequence AVWIFWLCFLVSGLSRAFLVYF.

The protein localises to the membrane. This is an uncharacterized protein from Treponema pallidum (strain Nichols).